A 392-amino-acid chain; its full sequence is Type III polyketide synthase B (392 aa).

57–64 provides a ligand contact to CoA; sequence KLTRLCKT. Cysteine 166 functions as the Nucleophile in the catalytic mechanism. 218 to 219 lines the substrate pocket; it reads GD. Residues leucine 269, 309-312, and alanine 312 contribute to the CoA site; that span reads GGPA.

The protein belongs to the thiolase-like superfamily. Chalcone/stilbene synthases family. As to quaternary structure, homodimer. Interacts with 4CLL1/ACOS5 and TKPR1. In terms of tissue distribution, expressed in flowers and flower buds (at protein level). Mostly confined to anther tapetal cells.

Its subcellular location is the endoplasmic reticulum. Its pathway is secondary metabolite biosynthesis; flavonoid biosynthesis. Plant type III polyketide synthases (PKSs) that catalyzes the condensation of malonyl-CoA units with various CoA ester starter molecules to generate a diverse array of natural products including long-chain alkyl alpha-pyrones. Accepts up to C(20) chain-length fatty acyl CoAs as starter substrates, and carries out sequential condensations with malonyl-CoA to produce triketide and tetraketide alpha-pyrones, potential sporopollenin precursors. Favorite substrates for are midchain- and v-hydroxylated fatty acyl-CoAs (e.g. 12-hydroxyoctadecanoyl-CoA and 16-hydroxyhexadecanoyl-CoA). Required for pollen development and sporopollenin biosynthesis, the major constituent of exine in the outer pollen wall. In vitro, can use 4-coumaroyl-coenzyme A as substrate to produce bis-noryangonin and fatty acyl-coenzyme A as substrate to produce medium-chain alkyl pyrones. May play a role in both the synthesis of pollen fatty acids and phenolics found in exine. The chain is Type III polyketide synthase B from Arabidopsis thaliana (Mouse-ear cress).